Consider the following 294-residue polypeptide: Bifunctional protein FolD (294 aa).

NADP(+) is bound by residues 175 to 177 (GVS) and I243.

The protein belongs to the tetrahydrofolate dehydrogenase/cyclohydrolase family. In terms of assembly, homodimer.

The enzyme catalyses (6R)-5,10-methylene-5,6,7,8-tetrahydrofolate + NADP(+) = (6R)-5,10-methenyltetrahydrofolate + NADPH. It catalyses the reaction (6R)-5,10-methenyltetrahydrofolate + H2O = (6R)-10-formyltetrahydrofolate + H(+). It functions in the pathway one-carbon metabolism; tetrahydrofolate interconversion. In terms of biological role, catalyzes the oxidation of 5,10-methylenetetrahydrofolate to 5,10-methenyltetrahydrofolate and then the hydrolysis of 5,10-methenyltetrahydrofolate to 10-formyltetrahydrofolate. This chain is Bifunctional protein FolD, found in Xanthomonas campestris pv. campestris (strain 8004).